The sequence spans 364 residues: WAT1-related protein At3g30340 (364 aa).

The next 10 helical transmembrane spans lie at Trp-9–Phe-29, Val-41–Leu-61, Ser-76–Leu-96, Thr-102–Phe-122, Leu-138–Ala-158, Trp-183–Val-203, Tyr-215–Ile-235, Val-251–Trp-271, Gly-277–Phe-297, and Ile-304–Trp-324. EamA domains lie at Asn-26–Thr-152 and Ile-195–Leu-323.

The protein belongs to the drug/metabolite transporter (DMT) superfamily. Plant drug/metabolite exporter (P-DME) (TC 2.A.7.4) family.

The protein localises to the membrane. In Arabidopsis thaliana (Mouse-ear cress), this protein is WAT1-related protein At3g30340.